The chain runs to 654 residues: MLQINSRLAVIDGWLVDTVKRKPINFRSPEVRLLLPNDDDYKKLSQQNLVDWTRLKKDSNSVLVGVKSMELFKHIKLVLREFFLLEDGRIILKRIRSKLRYKVVKKLTCKCCRLNLPKWGTVYIHPMLKDKEKPLAGVCEFSLDVNPDREYPLIEINVSHQYIIIEGFLLYLNERRLYRWNDNNLRSQVGLTKWAHLRKTYNPVSLDILYSLNSNFYFVKDDLLFQLLGKRVFVKFCKVMENGKCGKAPLWYRVKRTTTAKATHIAYAISNSTAPDSFKSKNNDYRFIVREKPIVENTISNLDYSDIKKQQFTEAEVVKRKISADISQIENVHTQFNSQKEKNNIRVNKVSSEVLDQISKFPVSRVTLLLISAGQDKNYIELVEELARRLEKICIEKTTQSLEEIRDTFQANPEMQARFDKEYYQSIEEYKITLELIKEDLLITLIKQMENMWAAEKKFSTEEEYVSPRFLVADGFLIDLAEEKPINPKDPRLLTLLKDHQRAMIDQMNLVKWNDFKKYQDPIPLKAKTLFKFCKQIKKKFLRGADFKLHTLPTEANLKYEPERMTVSCSCVPILLDDQTVQYLYDDSIIPEFEATSSYATKQSKCGGKMSLQMEPDLLFQEAIRRMRHLTAYDVLRRNYIAAFEELYMGNCND.

Positions 322–654 (ISADISQIEN…EELYMGNCND (333 aa)) are sufficient for interaction with SIR4. The segment at 449 to 587 (MENMWAAEKK…DQTVQYLYDD (139 aa)) is ORC interacting region (OIR).

Interacts (via OIR domain) with ORC1 (via BAH domain). Interacts with SIR4. Interacts with CAC1.

It localises to the nucleus. Its subcellular location is the chromosome. It is found in the centromere. In terms of biological role, involved in the establishment, but not the maintenance, of heterochromatic silencing at the cryptic mating-type loci HMR and HML. Is recruited by interacting with the ORC1 subunit of the origin recognition complex (ORC), which binds to HML-I or HMR-E silencers, DNA elements that direct the formation of silent chromatin at the mating-type loci. Establishes transcriptional silencing by recruiting the three other SIR proteins, SIR2, SIR3, and SIR4, that function directly in silenced chromatin and establish repression. Also found in centromeric chromatin. Binds to and helps retain CAC1, a subunit of chromatin assembly factor I (CAF-I) at centromeric loci independent on the other SIR proteins. This is Regulatory protein SIR1 (SIR1) from Saccharomyces cerevisiae (strain YJM789) (Baker's yeast).